We begin with the raw amino-acid sequence, 249 residues long: Probable transcriptional regulatory protein Strop_1792 (249 aa).

The protein belongs to the TACO1 family.

It is found in the cytoplasm. The chain is Probable transcriptional regulatory protein Strop_1792 from Salinispora tropica (strain ATCC BAA-916 / DSM 44818 / JCM 13857 / NBRC 105044 / CNB-440).